Consider the following 88-residue polypeptide: Guanine nucleotide-binding protein subunit gamma (88 aa).

The S-palmitoyl cysteine moiety is linked to residue C84. C85 carries the post-translational modification Cysteine methyl ester. A lipid anchor (S-farnesyl cysteine) is attached at C85. Positions 86–88 (TIM) are cleaved as a propeptide — removed in mature form.

This sequence belongs to the G protein gamma family. In terms of assembly, g proteins are composed of 3 units, alpha, beta and gamma.

It localises to the membrane. This Candida glabrata (strain ATCC 2001 / BCRC 20586 / JCM 3761 / NBRC 0622 / NRRL Y-65 / CBS 138) (Yeast) protein is Guanine nucleotide-binding protein subunit gamma.